A 338-amino-acid chain; its full sequence is Holliday junction branch migration complex subunit RuvB (338 aa).

A large ATPase domain (RuvB-L) region spans residues 1–184; that stretch reads MTEEERLLSA…FGIISHMEYY (184 aa). ATP contacts are provided by residues Leu23, Arg24, Gly65, Lys68, Thr69, Thr70, 131–133, Arg174, Tyr184, and Arg221; that span reads EDF. A Mg(2+)-binding site is contributed by Thr69. Residues 185–255 form a small ATPAse domain (RuvB-S) region; that stretch reads QEQDLKEIVL…IADKALTLLQ (71 aa). A head domain (RuvB-H) region spans residues 258-338; the sequence is HQGLDYVDQK…GYDYLEGRKN (81 aa). DNA-binding residues include Arg313 and Arg318.

The protein belongs to the RuvB family. As to quaternary structure, homohexamer. Forms an RuvA(8)-RuvB(12)-Holliday junction (HJ) complex. HJ DNA is sandwiched between 2 RuvA tetramers; dsDNA enters through RuvA and exits via RuvB. An RuvB hexamer assembles on each DNA strand where it exits the tetramer. Each RuvB hexamer is contacted by two RuvA subunits (via domain III) on 2 adjacent RuvB subunits; this complex drives branch migration. In the full resolvosome a probable DNA-RuvA(4)-RuvB(12)-RuvC(2) complex forms which resolves the HJ.

The protein localises to the cytoplasm. It catalyses the reaction ATP + H2O = ADP + phosphate + H(+). Functionally, the RuvA-RuvB-RuvC complex processes Holliday junction (HJ) DNA during genetic recombination and DNA repair, while the RuvA-RuvB complex plays an important role in the rescue of blocked DNA replication forks via replication fork reversal (RFR). RuvA specifically binds to HJ cruciform DNA, conferring on it an open structure. The RuvB hexamer acts as an ATP-dependent pump, pulling dsDNA into and through the RuvAB complex. RuvB forms 2 homohexamers on either side of HJ DNA bound by 1 or 2 RuvA tetramers; 4 subunits per hexamer contact DNA at a time. Coordinated motions by a converter formed by DNA-disengaged RuvB subunits stimulates ATP hydrolysis and nucleotide exchange. Immobilization of the converter enables RuvB to convert the ATP-contained energy into a lever motion, pulling 2 nucleotides of DNA out of the RuvA tetramer per ATP hydrolyzed, thus driving DNA branch migration. The RuvB motors rotate together with the DNA substrate, which together with the progressing nucleotide cycle form the mechanistic basis for DNA recombination by continuous HJ branch migration. Branch migration allows RuvC to scan DNA until it finds its consensus sequence, where it cleaves and resolves cruciform DNA. This chain is Holliday junction branch migration complex subunit RuvB, found in Enterococcus faecalis (strain ATCC 700802 / V583).